Consider the following 205-residue polypeptide: Outer-membrane lipoprotein LolB (205 aa).

Positions 1 to 17 (MFLRHCITFTLIALLAG) are cleaved as a signal peptide. Residue Cys18 is the site of N-palmitoyl cysteine attachment. A lipid anchor (S-diacylglycerol cysteine) is attached at Cys18.

The protein belongs to the LolB family. Monomer.

Its subcellular location is the cell outer membrane. Functionally, plays a critical role in the incorporation of lipoproteins in the outer membrane after they are released by the LolA protein. The polypeptide is Outer-membrane lipoprotein LolB (Pseudomonas putida (strain GB-1)).